Here is a 198-residue protein sequence, read N- to C-terminus: Glycerol-3-phosphate acyltransferase (198 aa).

The next 5 helical transmembrane spans lie at 4 to 24 (LALI…AVLI), 53 to 75 (SAAG…GGYF), 80 to 102 (PFML…FFHF), 112 to 132 (LGAL…CWVV), and 134 to 154 (VLVT…APLF).

The protein belongs to the PlsY family. In terms of assembly, probably interacts with PlsX.

The protein resides in the cell inner membrane. The catalysed reaction is an acyl phosphate + sn-glycerol 3-phosphate = a 1-acyl-sn-glycero-3-phosphate + phosphate. The protein operates within lipid metabolism; phospholipid metabolism. In terms of biological role, catalyzes the transfer of an acyl group from acyl-phosphate (acyl-PO(4)) to glycerol-3-phosphate (G3P) to form lysophosphatidic acid (LPA). This enzyme utilizes acyl-phosphate as fatty acyl donor, but not acyl-CoA or acyl-ACP. This Aliivibrio fischeri (strain ATCC 700601 / ES114) (Vibrio fischeri) protein is Glycerol-3-phosphate acyltransferase.